The sequence spans 442 residues: FBD-associated F-box protein At1g66310 (442 aa).

An F-box domain is found at 18–64; sequence VDWLRDLPESLLCHILLNLPTKDVVKTSVLSSKWRNLWRLVPGLDLD. The FBD domain maps to 363 to 415; that stretch reads KRRTSVLSGPRRLLSSLEYVEIESPLTGEVFEMKLVSYLLENSPILKKLTINL.

This chain is FBD-associated F-box protein At1g66310, found in Arabidopsis thaliana (Mouse-ear cress).